Reading from the N-terminus, the 332-residue chain is 4-hydroxy-3-methylbut-2-enyl diphosphate reductase (332 aa).

[4Fe-4S] cluster is bound at residue cysteine 34. 2 residues coordinate (2E)-4-hydroxy-3-methylbut-2-enyl diphosphate: histidine 63 and histidine 96. 2 residues coordinate dimethylallyl diphosphate: histidine 63 and histidine 96. Positions 63 and 96 each coordinate isopentenyl diphosphate. [4Fe-4S] cluster is bound at residue cysteine 118. Histidine 146 serves as a coordination point for (2E)-4-hydroxy-3-methylbut-2-enyl diphosphate. Histidine 146 contacts dimethylallyl diphosphate. Histidine 146 is an isopentenyl diphosphate binding site. The active-site Proton donor is the glutamate 148. Threonine 186 contacts (2E)-4-hydroxy-3-methylbut-2-enyl diphosphate. A [4Fe-4S] cluster-binding site is contributed by cysteine 216. Positions 244, 245, 246, and 289 each coordinate (2E)-4-hydroxy-3-methylbut-2-enyl diphosphate. Residues serine 244, serine 245, asparagine 246, and serine 289 each coordinate dimethylallyl diphosphate. Isopentenyl diphosphate contacts are provided by serine 244, serine 245, asparagine 246, and serine 289.

It belongs to the IspH family. [4Fe-4S] cluster is required as a cofactor.

It catalyses the reaction isopentenyl diphosphate + 2 oxidized [2Fe-2S]-[ferredoxin] + H2O = (2E)-4-hydroxy-3-methylbut-2-enyl diphosphate + 2 reduced [2Fe-2S]-[ferredoxin] + 2 H(+). It carries out the reaction dimethylallyl diphosphate + 2 oxidized [2Fe-2S]-[ferredoxin] + H2O = (2E)-4-hydroxy-3-methylbut-2-enyl diphosphate + 2 reduced [2Fe-2S]-[ferredoxin] + 2 H(+). It participates in isoprenoid biosynthesis; dimethylallyl diphosphate biosynthesis; dimethylallyl diphosphate from (2E)-4-hydroxy-3-methylbutenyl diphosphate: step 1/1. It functions in the pathway isoprenoid biosynthesis; isopentenyl diphosphate biosynthesis via DXP pathway; isopentenyl diphosphate from 1-deoxy-D-xylulose 5-phosphate: step 6/6. Functionally, catalyzes the conversion of 1-hydroxy-2-methyl-2-(E)-butenyl 4-diphosphate (HMBPP) into a mixture of isopentenyl diphosphate (IPP) and dimethylallyl diphosphate (DMAPP). Acts in the terminal step of the DOXP/MEP pathway for isoprenoid precursor biosynthesis. This Mycobacterium ulcerans (strain Agy99) protein is 4-hydroxy-3-methylbut-2-enyl diphosphate reductase.